The following is a 152-amino-acid chain: Toxin Res (152 aa).

It belongs to the MbcT/ParT/Res family. In terms of assembly, homodimer. Forms a complex with cognate antitoxin Xre.

Its function is as follows. Toxic component of a type II toxin-antitoxin (TA) system. Expression in E.coli inhibits cell growth; bacteriostasis is neutralized by expression of cognate antitoxin Xre. Probably depletes intracellular NAD(+). The polypeptide is Toxin Res (Yersinia enterocolitica serotype O:8 / biotype 1B (strain NCTC 13174 / 8081)).